A 451-amino-acid polypeptide reads, in one-letter code: Glycosyltransferase-like At2g41451 (451 aa).

A signal peptide spans 1-23 (MASSDSSYSRKFLLITFLPLSLA). N-linked (GlcNAc...) asparagine glycans are attached at residues Asn36, Asn137, Asn168, Asn441, and Asn444. In terms of domain architecture, GT92 spans 109-345 (QTLPWIFYHK…TYSKFSDLTS (237 aa)).

Belongs to the glycosyltransferase 92 family.

The protein localises to the secreted. It localises to the cell wall. The protein resides in the cytoplasm. It is found in the cell membrane. Involved in the coordination between cell elongation and cellulose synthesis by promoting the expression of genes involved in cell elongation and cellulose synthesis. Acts as a regulator of plasmodesmatal permeability. Maybe a glycosyltransferase. The polypeptide is Glycosyltransferase-like At2g41451 (Arabidopsis thaliana (Mouse-ear cress)).